Consider the following 356-residue polypeptide: Heat-inducible transcription repressor HrcA (356 aa).

The protein belongs to the HrcA family.

In terms of biological role, negative regulator of class I heat shock genes (grpE-dnaK-dnaJ and groELS operons). Prevents heat-shock induction of these operons. This chain is Heat-inducible transcription repressor HrcA, found in Bartonella henselae (strain ATCC 49882 / DSM 28221 / CCUG 30454 / Houston 1) (Rochalimaea henselae).